We begin with the raw amino-acid sequence, 1342 residues long: DNA-directed RNA polymerase subunit beta (1342 aa).

Belongs to the RNA polymerase beta chain family. As to quaternary structure, the RNAP catalytic core consists of 2 alpha, 1 beta, 1 beta' and 1 omega subunit. When a sigma factor is associated with the core the holoenzyme is formed, which can initiate transcription.

The catalysed reaction is RNA(n) + a ribonucleoside 5'-triphosphate = RNA(n+1) + diphosphate. In terms of biological role, DNA-dependent RNA polymerase catalyzes the transcription of DNA into RNA using the four ribonucleoside triphosphates as substrates. The chain is DNA-directed RNA polymerase subunit beta from Erwinia tasmaniensis (strain DSM 17950 / CFBP 7177 / CIP 109463 / NCPPB 4357 / Et1/99).